Here is a 1819-residue protein sequence, read N- to C-terminus: U3 small nucleolar RNA-associated protein 10 (1819 aa).

An HEAT repeat occupies 1779–1817 (LIPYIAELLEDDDEDVELEVRKGLVKVLENVLGEPLDRY).

It belongs to the HEATR1/UTP10 family. Component of the ribosomal small subunit (SSU) processome.

The protein resides in the nucleus. Its subcellular location is the nucleolus. Functionally, involved in nucleolar processing of pre-18S ribosomal RNA. Involved in ribosome biosynthesis. This is U3 small nucleolar RNA-associated protein 10 from Meyerozyma guilliermondii (strain ATCC 6260 / CBS 566 / DSM 6381 / JCM 1539 / NBRC 10279 / NRRL Y-324) (Yeast).